The sequence spans 333 residues: Gamma-D-glutamyl-L-lysine dipeptidyl-peptidase (333 aa).

The N-terminal stretch at 1 to 23 (MKKVGTAFLTTLFIFSSFTSAHA) is a signal peptide. Substrate is bound by residues Glu-83, Tyr-118, 237 to 239 (DCS), and 256 to 257 (DS). A NlpC/P60 domain is found at 208–332 (TPAADDLINT…EEYAGARRYL (125 aa)). Cys-238 serves as the catalytic Nucleophile. His-291 serves as the catalytic Proton acceptor. The active site involves His-303.

This sequence belongs to the peptidase C40 family. In terms of assembly, monomer in solution.

It carries out the reaction The enzyme releases L-Ala-gamma-D-Glu dipeptides from cell wall peptides via cleavage of an L-Ala-gamma-D-Glu-|-L-Lys bond.. The protein operates within cell wall degradation; peptidoglycan degradation. Its function is as follows. Specifically hydrolyzes gamma-D-glutamyl-L-lysine bonds in murein peptides, releasing L-Ala-D-Glu. This is Gamma-D-glutamyl-L-lysine dipeptidyl-peptidase from Bacillus cereus (strain ATCC 10987 / NRS 248).